A 350-amino-acid chain; its full sequence is Homoserine O-succinyltransferase (350 aa).

The active-site Acyl-thioester intermediate is cysteine 146. Substrate contacts are provided by lysine 167 and serine 196. Histidine 239 (proton acceptor) is an active-site residue. The active site involves glutamate 241. Residue arginine 253 participates in substrate binding.

Belongs to the MetA family.

It is found in the cytoplasm. It carries out the reaction L-homoserine + succinyl-CoA = O-succinyl-L-homoserine + CoA. It participates in amino-acid biosynthesis; L-methionine biosynthesis via de novo pathway; O-succinyl-L-homoserine from L-homoserine: step 1/1. In terms of biological role, transfers a succinyl group from succinyl-CoA to L-homoserine, forming succinyl-L-homoserine. The polypeptide is Homoserine O-succinyltransferase (Cardiobacterium hominis (strain ATCC 15826 / DSM 8339 / NCTC 10426 / 6573)).